Reading from the N-terminus, the 86-residue chain is Toxin Tpa5 (86 aa).

An N-terminal signal peptide occupies residues 1–20; sequence MSIFPIALALLLIGLEEGEA. Residues 22–85 form the LCN-type CS-alpha/beta domain; sequence RDGYPISKNN…WGDPGTPPCM (64 aa). 4 disulfide bridges follow: cysteine 33–cysteine 84, cysteine 37–cysteine 58, cysteine 43–cysteine 64, and cysteine 47–cysteine 66.

It belongs to the long (4 C-C) scorpion toxin superfamily. Sodium channel inhibitor family. Beta subfamily. Expressed by the venom gland.

Its subcellular location is the secreted. Beta toxins bind voltage-independently at site-4 of sodium channels (Nav) and shift the voltage of activation toward more negative potentials thereby affecting sodium channel activation and promoting spontaneous and repetitive firing. This Tityus pachyurus (Colombian scorpion) protein is Toxin Tpa5.